Here is a 710-residue protein sequence, read N- to C-terminus: Bifunctional sesterterpene synthase (710 aa).

The stellata-2,6,19-trien synthase stretch occupies residues 1 to 327; that stretch reads MEFKFSAVVD…RYYTDASFSE (327 aa). Mg(2+)-binding residues include Asp-92 and Asp-96. Residues Asp-92, Asp-96, 181-184, and 229-233 each bind substrate; these read RVHD and SWDKE. The short motif at 92 to 96 is the DDXXD motif 1 element; the sequence is DDVTD. Positions 278 to 286 match the NSE motif motif; the sequence is YLRVFEEVK. Position 318–319 (318–319) interacts with substrate; that stretch reads RY. The interval 328–709 is geranylgeranyl diphosphate synthase; it reads RQLEWMKNGI…LRLIFELLRN (382 aa). Positions 365–404 are disordered; that stretch reads HHAVTSNGTGTGSHDTLNGDGTAHENNSRDASIPGRTTNG. Residues 368-380 show a composition bias toward polar residues; the sequence is VTSNGTGTGSHDT. Residues Lys-430, Arg-433, and His-462 each coordinate isopentenyl diphosphate. The Mg(2+) site is built by Asp-469 and Asp-473. A DDXXD motif 2 motif is present at residues 469 to 473; sequence DDLED. Arg-478 is a binding site for dimethylallyl diphosphate. Residue Arg-479 participates in isopentenyl diphosphate binding. Dimethylallyl diphosphate is bound by residues Lys-556, Thr-557, Gln-592, Asn-599, Lys-609, and Lys-619.

In the C-terminal section; belongs to the FPP/GGPP synthase family. It in the N-terminal section; belongs to the terpene synthase family. In terms of assembly, hexamer.

The catalysed reaction is 4 isopentenyl diphosphate + dimethylallyl diphosphate = (2E,6E,10E,14E)-geranylfarnesyl diphosphate + 4 diphosphate. The enzyme catalyses (2E,6E,10E,14E)-geranylfarnesyl diphosphate = variecoladiene + diphosphate. Its pathway is secondary metabolite biosynthesis; terpenoid biosynthesis. Functionally, multifunctional sesterterpene synthase; part of the gene cluster that mediates the biosynthesis of the sesterterpene variecolin. The first step in the pathway is performed by the variecoladiene synthase vrcA that possesses both prenyl transferase and terpene cyclase activity, converting isopentenyl diphosphate and dimethylallyl diphosphate into geranylfarnesyl pyrophosphate (GFPP) and then converting GFPP into the tetracyclic variecoladiene. The cytochrome P450 monooxygenase vrcB then catalyzes multiple oxidations at C-5 and C-20 positions to yield variecolin. This Aspergillus aculeatus (strain ATCC 16872 / CBS 172.66 / WB 5094) protein is Bifunctional sesterterpene synthase.